A 397-amino-acid chain; its full sequence is Enoyl-[acyl-carrier-protein] reductase [NADH] (397 aa).

NAD(+) contacts are provided by residues 48 to 53, 74 to 75, 111 to 112, and 139 to 140; these read GASTGY, FE, DA, and AA. Tyr225 contributes to the substrate binding site. Catalysis depends on Tyr235, which acts as the Proton donor. Residues Lys244 and 273 to 275 each bind NAD(+); that span reads VVT.

Belongs to the TER reductase family. As to quaternary structure, monomer.

The enzyme catalyses a 2,3-saturated acyl-[ACP] + NAD(+) = a (2E)-enoyl-[ACP] + NADH + H(+). It functions in the pathway lipid metabolism; fatty acid biosynthesis. Functionally, involved in the final reduction of the elongation cycle of fatty acid synthesis (FAS II). Catalyzes the reduction of a carbon-carbon double bond in an enoyl moiety that is covalently linked to an acyl carrier protein (ACP). The protein is Enoyl-[acyl-carrier-protein] reductase [NADH] of Burkholderia pseudomallei (strain 1710b).